The primary structure comprises 434 residues: 3-phosphoshikimate 1-carboxyvinyltransferase (434 aa).

Residues Lys-22, Ser-23, and Arg-27 each coordinate 3-phosphoshikimate. Residue Lys-22 participates in phosphoenolpyruvate binding. Gly-93 and Arg-121 together coordinate phosphoenolpyruvate. Residues Ser-168, Ser-169, Gln-170, Ser-199, Asp-320, and Lys-347 each contribute to the 3-phosphoshikimate site. Gln-170 contacts phosphoenolpyruvate. Asp-320 functions as the Proton acceptor in the catalytic mechanism. The phosphoenolpyruvate site is built by Arg-351, Arg-394, and Lys-419.

Belongs to the EPSP synthase family. In terms of assembly, monomer.

The protein resides in the cytoplasm. The enzyme catalyses 3-phosphoshikimate + phosphoenolpyruvate = 5-O-(1-carboxyvinyl)-3-phosphoshikimate + phosphate. It participates in metabolic intermediate biosynthesis; chorismate biosynthesis; chorismate from D-erythrose 4-phosphate and phosphoenolpyruvate: step 6/7. Catalyzes the transfer of the enolpyruvyl moiety of phosphoenolpyruvate (PEP) to the 5-hydroxyl of shikimate-3-phosphate (S3P) to produce enolpyruvyl shikimate-3-phosphate and inorganic phosphate. The chain is 3-phosphoshikimate 1-carboxyvinyltransferase from Burkholderia vietnamiensis (strain G4 / LMG 22486) (Burkholderia cepacia (strain R1808)).